The sequence spans 156 residues: Small ribosomal subunit protein uS7 (156 aa).

It belongs to the universal ribosomal protein uS7 family. Part of the 30S ribosomal subunit. Contacts proteins S9 and S11.

In terms of biological role, one of the primary rRNA binding proteins, it binds directly to 16S rRNA where it nucleates assembly of the head domain of the 30S subunit. Is located at the subunit interface close to the decoding center, probably blocks exit of the E-site tRNA. This Streptococcus pyogenes serotype M3 (strain ATCC BAA-595 / MGAS315) protein is Small ribosomal subunit protein uS7.